We begin with the raw amino-acid sequence, 334 residues long: Chorismatase (334 aa).

Substrate is bound by residues Tyr143, Arg150, Tyr203, and Arg216. Glu328 functions as the Proton acceptor in the catalytic mechanism.

Belongs to the FkbO/Hyg5 family. As to quaternary structure, monomer.

It catalyses the reaction chorismate + H2O = (3R,4R)-3,4-dihydroxy-3,4-dihydrobenzoate + pyruvate. Involved in the biosynthesis of the macrocyclic amino acid-linked polyketides rapamycin which is a potent immunosuppressant that prevents T-cell proliferation through initial binding to the immunophilin FKBP12. Catalyzes the hydrolysis of chorismate via a 1,4-conjugate elimination of water to yield (4R,5R)-4,5-dihydroxycyclohexa-1,5-dienecarboxylic acid (DCDC). The sequence is that of Chorismatase (rapK) from Streptomyces rapamycinicus (strain ATCC 29253 / DSM 41530 / NRRL 5491 / AYB-994) (Streptomyces hygroscopicus (strain ATCC 29253)).